We begin with the raw amino-acid sequence, 145 residues long: Glutaconyl-CoA decarboxylase subunit gamma (145 aa).

A disordered region spans residues 52-82 (APAPAAAPAAAPAPAAKPAAAAPAGSVTVSA). Over residues 57–75 (AAPAAAPAPAAKPAAAAPA) the composition is skewed to low complexity. A Biotinyl-binding domain is found at 77–145 (SVTVSAPMPG…VATGDVMVIL (69 aa)). K112 carries the post-translational modification N6-biotinyllysine.

Heterooctamer consisting of two alpha, two beta, two gamma and two delta subunits. It depends on biotin as a cofactor.

It carries out the reaction (2E)-glutaconyl-CoA + Na(+)(in) + H(+) = (2E)-butenoyl-CoA + Na(+)(out) + CO2. It functions in the pathway amino-acid degradation; L-glutamate degradation via hydroxyglutarate pathway; crotonoyl-CoA from L-glutamate: step 5/5. Functionally, biotin carrier subunit of the primary sodium pump glutaconyl-CoA decarboxylase (GCD). This Acidaminococcus fermentans (strain ATCC 25085 / DSM 20731 / CCUG 9996 / CIP 106432 / VR4) protein is Glutaconyl-CoA decarboxylase subunit gamma (gcdC).